A 214-amino-acid chain; its full sequence is MGEGHGDTFEGVSTDRLKLELLEEIHMKDVVQLSTLEIRHKIAELEANLNGDLAGSEWKTRYETQLELNDQLEKQIVSLKEKMEKMRGNPSDRLSSIRVYEKMPVESLNVLLKQLEKEKRSLESQVKEYAFRLEQESKAYHRTNNERRSYIAEMTQVSGSNQVSKRQQMDPLPRMKESPVKTGRHNSMNQKTTNAKKGPVKKVPRSNHLPKLNP.

Residues 56–138 (SEWKTRYETQ…YAFRLEQESK (83 aa)) adopt a coiled-coil conformation. Residues 154–214 (MTQVSGSNQV…RSNHLPKLNP (61 aa)) are disordered. Polar residues-rich tracts occupy residues 155–166 (TQVSGSNQVSKR) and 185–195 (HNSMNQKTTNA).

This sequence belongs to the CCDC169 family.

This chain is Coiled-coil domain-containing protein 169 (Ccdc169), found in Mus musculus (Mouse).